The primary structure comprises 277 residues: uncharacterized protein (277 aa).

The segment at 139-167 (TARELSLDCSCPDYAVPCKHLAATFYLLA) adopts an SWIM-type zinc-finger fold.

This is an uncharacterized protein from Mycobacterium tuberculosis (strain ATCC 25618 / H37Rv).